The following is a 466-amino-acid chain: Argininosuccinate lyase (466 aa).

Belongs to the lyase 1 family. Argininosuccinate lyase subfamily.

Its subcellular location is the cytoplasm. It carries out the reaction 2-(N(omega)-L-arginino)succinate = fumarate + L-arginine. It participates in amino-acid biosynthesis; L-arginine biosynthesis; L-arginine from L-ornithine and carbamoyl phosphate: step 3/3. This Bartonella bacilliformis (strain ATCC 35685 / KC583 / Herrer 020/F12,63) protein is Argininosuccinate lyase.